Reading from the N-terminus, the 91-residue chain is Small ribosomal subunit protein uS19m (91 aa).

The protein belongs to the universal ribosomal protein uS19 family. As to quaternary structure, component of the mitochondrial small ribosomal subunit (mt-SSU). Mature N.crassa 74S mitochondrial ribosomes consist of a small (37S) and a large (54S) subunit. The 37S small subunit contains a 16S ribosomal RNA (16S mt-rRNA) and 32 different proteins. The 54S large subunit contains a 23S rRNA (23S mt-rRNA) and 42 different proteins.

It is found in the mitochondrion. Component of the mitochondrial ribosome (mitoribosome), a dedicated translation machinery responsible for the synthesis of mitochondrial genome-encoded proteins, including at least some of the essential transmembrane subunits of the mitochondrial respiratory chain. The mitoribosomes are attached to the mitochondrial inner membrane and translation products are cotranslationally integrated into the membrane. This is Small ribosomal subunit protein uS19m (rsm19) from Neurospora crassa (strain ATCC 24698 / 74-OR23-1A / CBS 708.71 / DSM 1257 / FGSC 987).